A 241-amino-acid chain; its full sequence is tRNA pseudouridine synthase A (241 aa).

Asp53 acts as the Nucleophile in catalysis. A substrate-binding site is contributed by Tyr110.

It belongs to the tRNA pseudouridine synthase TruA family. Homodimer.

It catalyses the reaction uridine(38/39/40) in tRNA = pseudouridine(38/39/40) in tRNA. Its function is as follows. Formation of pseudouridine at positions 38, 39 and 40 in the anticodon stem and loop of transfer RNAs. This is tRNA pseudouridine synthase A from Malacoplasma penetrans (strain HF-2) (Mycoplasma penetrans).